Reading from the N-terminus, the 1208-residue chain is MRLFSLLPLLALLVVQAAGQSEVTSDDPATDAGSTTNSTTDTKPRIPSQDEILGQMPSINPIRTGNPQMDAFYMMFPALGSLLKWGSLFPAYSILGAIPDNLQPTAAASKVVLVLADDATAKTRVARQNPPPNPLGQLMNWPALPQDFQLPSMDLGPQVGSFLAQLPAMPTVPGLLGAAAPVPAPAPAPAAAPPPAPAPAADPPAAPVPDAPQPAILGQAALQNAFTFFNPANFDASSLLGQSVPTFAPPNLDFVAQMQRQFFPGMTPAQPAAAGTDAQASDISEVRVRPEDPYSQEAQMKIKSALEMEQERQQQAQVKDQEQVPLLWFRMPTTQNQDATEEKTLEDLRVEAKLRAFERQVIAELRMLQKIELMAKQMRSSAAAQNGDSPYRISYPLSRTPIHKITRADIEQALRDDYVRRLVNKEAQRRARNSGINTQKANALKRQAKSQDQTLSKEDIVQIMAYAYRMANEQMESEKGKQDKVYAAYRTEQNPMMMQQRQWSEEQAKIQQNQQQIQQNPMMMQQRQWSEEQAKIQQNQQQIQQNPMMMQQRQWSEEQAKIQQNQQQIQQNPMMMQQRQWSEEQAKIQQNQQQIQQNPMMVQQRQWSEEQAKIQQNQQQIQQNPMMMQQRQWSEEQAKIQHDQQMAQQMAQQGLMMTEQRQRQWSEDQAKIQQAQQMAQQTPMMMPQMQQRQWTEDPQMVQQMQQRQWAEDQTRMQMAQQNPMMQQQRQMAENPQMMQQRQWSEEQTKIEQAQQMAQQNQMMMQQMQQRQWSEDQAQIQQQQRQMMQQTPMMMKERQWAEENPQSVQQQGPMMMQQQMPSMMQREVEDEDNKAEDDLVGEAGPQMPENEGTARHKVDALGVGGNKRKKSKSKSAPPTVINYYYAAPQRPVVQSYGTSYGGGGYGSNAYGVPRPVNSYQSQGYRAAVGNDEVDEMLRQHQTMARTINPKQPGEVGGSESQKSNSNPPTTLTPAPQEQPQEHRVHKSPSSAPSETEIENAPSSDPQVGSIFTYGEGLLHPFMGLLPVERPDDPWNQKPYDPHHPLYTGGGSYDAYLRDGRHRRDTHIMGQGTQHGILTPGMLERLLRIKMDFQRRFPHLYKGMLNHHTNLTRVEVQPPVLGKISKPKTKTKPKNEDEPVFELGAAERSLFEDETNDSLEKDPEPEPDEEDDRDVEEPSESSEPRGFSSKKSRDENDIDYFNFDDDDVDD.

The signal sequence occupies residues 1–19 (MRLFSLLPLLALLVVQAAG). Disordered regions lie at residues 23 to 60 (VTSD…PSIN), 184 to 212 (APAP…PDAP), and 268 to 294 (PAQP…EDPY). Polar residues predominate over residues 32–41 (AGSTTNSTTD). The segment covering 268-280 (PAQPAAAGTDAQA) has biased composition (low complexity). 5 repeat units span residues 493–518 (QNPM…QQIQ), 519–544 (QNPM…QQIQ), 545–570 (QNPM…QQIQ), 571–596 (QNPM…QQIQ), and 597–622 (QNPM…QQIQ). The segment at 493-788 (QNPMMMQQRQ…IQQQQRQMMQ (296 aa)) is 12 X 26 AA approximate tandem repeats, Glu, Met-rich. The 6; approximate repeat unit spans residues 623 to 652 (QNPMMMQQRQWSEEQAKIQHDQQMAQQMAQ). The stretch at 653–680 (QGLMMTEQRQRQWSEDQAKIQQAQQMAQ) is one 7; approximate repeat. An 8; approximate repeat occupies 681-696 (QTPMMMPQMQQRQWTE). Residues 697–720 (DPQMVQQMQQRQWAEDQTRMQMAQ) form a 9; approximate repeat. The stretch at 721–733 (QNPMMQQQRQMAE) is one 10; approximate repeat. Residues 734–758 (NPQMMQQRQWSEEQTKIEQAQQMAQ) form an 11; approximate repeat. Residues 759 to 788 (QNQMMMQQMQQRQWSEDQAQIQQQQRQMMQ) form a 12; approximate repeat. Residues 828 to 839 (EDEDNKAEDDLV) are compositionally biased toward acidic residues. Disordered regions lie at residues 828-875 (EDED…SKSA), 944-1010 (RTIN…GSIF), and 1114-1208 (VQPP…DVDD). Over residues 957–977 (SESQKSNSNPPTTLTPAPQEQ) the composition is skewed to polar residues. Composition is skewed to acidic residues over residues 1163–1178 (PEPD…EPSE) and 1194–1208 (NDID…DVDD).

Its subcellular location is the secreted. Functionally, required for proper assembly of the eggshell. This Drosophila melanogaster (Fruit fly) protein is Defective chorion protein, FC125 isoform.